A 570-amino-acid polypeptide reads, in one-letter code: Probable D-xylulose kinase A (570 aa).

His-95, Arg-166, Asp-282, and Asn-283 together coordinate substrate. ATP-binding positions include Trp-364, Gly-469–Gly-470, and Asn-473.

This sequence belongs to the FGGY kinase family.

It is found in the cytoplasm. The catalysed reaction is D-xylulose + ATP = D-xylulose 5-phosphate + ADP + H(+). Its function is as follows. Highly specific D-xylulose kinase which participates in the catabolism of xylose. Xylose is a major component of hemicelluloses such as xylan. Most fungi utilize D-xylose via three enzymatic reactions, xylose reductase (XR), xylitol dehydrogenase (XDH), and xylulokinase, to form xylulose 5-phosphate, which enters pentose phosphate pathway. The protein is Probable D-xylulose kinase A (xkiA) of Aspergillus niger (strain ATCC MYA-4892 / CBS 513.88 / FGSC A1513).